A 505-amino-acid chain; its full sequence is Outer capsid protein VP5 (505 aa).

The interval 1-42 (MGKFTSFLKRAGNATKRALTSDSAKKMYKLAGKTLQRVVESE) is involved in membrane permeabilization.

It belongs to the orbivirus VP5 family.

The protein localises to the virion. VP5 protein is one of the two proteins (with VP2) which constitute the virus particle outer capsid. Acts as a membrane permeabilization protein that mediates release of viral particles from endosomal compartments into the cytoplasm. Permeabilization activity is probably negatively regulated by VP2 and is triggered by endosomal degradation of VP2 and exposure to low pH. This chain is Outer capsid protein VP5 (Segment-6), found in African horse sickness virus (AHSV).